A 183-amino-acid polypeptide reads, in one-letter code: uncharacterized protein (183 aa).

This is an uncharacterized protein from Archaeoglobus fulgidus (strain ATCC 49558 / DSM 4304 / JCM 9628 / NBRC 100126 / VC-16).